Here is an 821-residue protein sequence, read N- to C-terminus: Elongator complex protein 2 (821 aa).

13 WD repeats span residues 56–100, 105–152, 160–200, 205–246, 280–328, 338–377, 385–424, 435–473, 563–607, 610–649, 665–704, 716–760, and 773–821; these read GHTA…VLKS, GHEG…VKCL, GFVL…FQKM, GHED…TSLE, GHEN…GVWL, GNTLGFYGCQFGENGSMIIAHAFHGAMHLWKQSTVNPRQW, GHFDGVQDLIWDPEGEFIITTSTDQTTRLFAPWKKKNQSQ, IHGYNLKCLAMIDRFQFVSGADEKVLRVFSAPRNFVENF, GHGY…QVQS, YHTLTVTQMAFSPDDKFLLAVSRDRTWSLWKRQDVTSAEF, VHSRIIWSCDWSPDSKYFFTGSRDKKVVVWGECNSSYNPM, DVGS…QETK, and SHTL…RCAL.

Belongs to the WD repeat ELP2 family. Component of the elongator complex which consists of ELP1, ELP2, ELP3, ELP4, ELP5 and ELP6. Interacts with STAT3 and JAKs.

Its subcellular location is the cytoplasm. It localises to the nucleus. The protein operates within tRNA modification; 5-methoxycarbonylmethyl-2-thiouridine-tRNA biosynthesis. In terms of biological role, component of the elongator complex which is required for multiple tRNA modifications, including mcm5U (5-methoxycarbonylmethyl uridine), mcm5s2U (5-methoxycarbonylmethyl-2-thiouridine), and ncm5U (5-carbamoylmethyl uridine). The elongator complex catalyzes the formation of carboxymethyluridine in the wobble base at position 34 in tRNAs. This is Elongator complex protein 2 (Elp2) from Rattus norvegicus (Rat).